A 178-amino-acid chain; its full sequence is Adenine phosphoribosyltransferase (178 aa).

Belongs to the purine/pyrimidine phosphoribosyltransferase family. As to quaternary structure, homodimer.

It localises to the cytoplasm. It catalyses the reaction AMP + diphosphate = 5-phospho-alpha-D-ribose 1-diphosphate + adenine. It functions in the pathway purine metabolism; AMP biosynthesis via salvage pathway; AMP from adenine: step 1/1. In terms of biological role, catalyzes a salvage reaction resulting in the formation of AMP, that is energically less costly than de novo synthesis. This is Adenine phosphoribosyltransferase from Streptomyces clavuligerus.